Reading from the N-terminus, the 557-residue chain is Formate--tetrahydrofolate ligase (557 aa).

67–74 (TPAGEGKS) provides a ligand contact to ATP.

The protein belongs to the formate--tetrahydrofolate ligase family.

The catalysed reaction is (6S)-5,6,7,8-tetrahydrofolate + formate + ATP = (6R)-10-formyltetrahydrofolate + ADP + phosphate. It functions in the pathway one-carbon metabolism; tetrahydrofolate interconversion. This Latilactobacillus sakei subsp. sakei (strain 23K) (Lactobacillus sakei subsp. sakei) protein is Formate--tetrahydrofolate ligase.